The sequence spans 302 residues: Sulfate adenylyltransferase subunit 2 (302 aa).

This sequence belongs to the PAPS reductase family. CysD subfamily. As to quaternary structure, heterodimer composed of CysD, the smaller subunit, and CysN.

The catalysed reaction is sulfate + ATP + H(+) = adenosine 5'-phosphosulfate + diphosphate. It participates in sulfur metabolism; hydrogen sulfide biosynthesis; sulfite from sulfate: step 1/3. In terms of biological role, with CysN forms the ATP sulfurylase (ATPS) that catalyzes the adenylation of sulfate producing adenosine 5'-phosphosulfate (APS) and diphosphate, the first enzymatic step in sulfur assimilation pathway. APS synthesis involves the formation of a high-energy phosphoric-sulfuric acid anhydride bond driven by GTP hydrolysis by CysN coupled to ATP hydrolysis by CysD. This chain is Sulfate adenylyltransferase subunit 2, found in Pectobacterium carotovorum subsp. carotovorum (strain PC1).